The following is an 875-amino-acid chain: Serine/threonine-protein kinase D2 (875 aa).

The segment covering 1–12 (MAAAPSHPAGLP) has biased composition (low complexity). Residues 1 to 35 (MAAAPSHPAGLPGSPGPGSPPPPGGLDLQSPPPLL) form a disordered region. Over residues 14–35 (SPGPGSPPPPGGLDLQSPPPLL) the composition is skewed to pro residues. Serine 30 carries the post-translational modification Phosphoserine. At tyrosine 87 the chain carries Phosphotyrosine. The segment at 138–188 (PHALTVHSYRAPAFCDHCGEMLFGLVRQGLKCDGCGLNYHKRCAFSIPNNC) adopts a Phorbol-ester/DAG-type 1 zinc-finger fold. Serine 197, serine 198, serine 200, serine 203, serine 206, serine 211, serine 212, and serine 214 each carry phosphoserine. Residues 224–247 (RSTTDLLPRRPPSSSSSSSSSSFY) form a disordered region. The segment covering 236-245 (SSSSSSSSSS) has biased composition (low complexity). Serine 244 carries the post-translational modification Phosphoserine; by CSNK1D and CSNK1E. Serine 245 carries the phosphoserine modification. The Phorbol-ester/DAG-type 2 zinc-finger motif lies at 265 to 315 (PHTFLIHSYTRPTVCQACKKLLKGLFRQGLQCKDCKFNCHKRCATRVPNDC). The interval 332 to 374 (DYSEADKSSISDELEDSGVIPGSHSESALHASEEEEGEGHKAQ) is disordered. Positions 398 to 510 (TTLREGWVVH…WETAIRQALM (113 aa)) constitute a PH domain. Residue tyrosine 408 is modified to Phosphotyrosine. At tyrosine 439 the chain carries Phosphotyrosine; by ABL1. At serine 519 the chain carries Phosphoserine. The 257-residue stretch at 552-808 (IFPDEVLGSG…VDKSLSHPWL (257 aa)) folds into the Protein kinase domain. Residues 558–566 (LGSGQFGVV) and lysine 581 each bind ATP. The Proton acceptor role is filled by aspartate 675. A Phosphoserine; by PKC modification is found at serine 707. Serine 711 bears the Phosphoserine; by autocatalysis mark. Tyrosine 718 is modified (phosphotyrosine; by ABL1). The Important for ABL1-mediated Tyr-718 phosphorylation motif lies at 725–727 (LNQ). A Phosphoserine; by autocatalysis modification is found at serine 873.

This sequence belongs to the protein kinase superfamily. CAMK Ser/Thr protein kinase family. PKD subfamily. Interacts (via C-terminus) with LCK. Interacts (via N-terminus and zing-finger domain 1 and 2) with PRKCD in response to oxidative stress; the interaction is independent of PRKD2 tyrosine phosphorylation. Mg(2+) serves as cofactor. In terms of processing, phosphorylation of Ser-873 correlates with the activation status of the kinase. Ser-707 is probably phosphorylated by PKC. Phosphorylation at Ser-244 by CSNK1D and CSNK1E promotes nuclear localization and substrate targeting. Phosphorylation at Ser-244, Ser-707 and Ser-711 is required for nuclear localization. Phosphorylated at Tyr-438 by ABL1 in response to oxidative stress. Phosphorylated at Tyr-718 by ABL1 specifically in response to oxidative stress; requires prior phosphorylation at Ser-707 or/and Ser-711.

Its subcellular location is the cytoplasm. It is found in the cell membrane. It localises to the golgi apparatus. The protein localises to the trans-Golgi network. The enzyme catalyses L-seryl-[protein] + ATP = O-phospho-L-seryl-[protein] + ADP + H(+). It carries out the reaction L-threonyl-[protein] + ATP = O-phospho-L-threonyl-[protein] + ADP + H(+). Its activity is regulated as follows. Activated by DAG and phorbol esters. Phorbol-ester/DAG-type domains bind DAG, mediating translocation to membranes. Autophosphorylation of Ser-711 and phosphorylation of Ser-707 by PKC relieves auto-inhibition by the PH domain. Catalytic activity is further increased by phosphorylation at Tyr-718 in response to oxidative stress. Functionally, serine/threonine-protein kinase that converts transient diacylglycerol (DAG) signals into prolonged physiological effects downstream of PKC, and is involved in the regulation of cell proliferation via MAPK1/3 (ERK1/2) signaling, oxidative stress-induced NF-kappa-B activation, inhibition of HDAC7 transcriptional repression, signaling downstream of T-cell antigen receptor (TCR) and cytokine production, and plays a role in Golgi membrane trafficking, angiogenesis, secretory granule release and cell adhesion. May potentiate mitogenesis induced by the neuropeptide bombesin by mediating an increase in the duration of MAPK1/3 (ERK1/2) signaling, which leads to accumulation of immediate-early gene products including FOS that stimulate cell cycle progression. In response to oxidative stress, is phosphorylated at Tyr-438 and Tyr-718 by ABL1, which leads to the activation of PRKD2 without increasing its catalytic activity, and mediates activation of NF-kappa-B. In response to the activation of the gastrin receptor CCKBR, is phosphorylated at Ser-244 by CSNK1D and CSNK1E, translocates to the nucleus, phosphorylates HDAC7, leading to nuclear export of HDAC7 and inhibition of HDAC7 transcriptional repression of NR4A1/NUR77. Upon TCR stimulation, is activated independently of ZAP70, translocates from the cytoplasm to the nucleus and is required for interleukin-2 (IL2) promoter up-regulation. During adaptive immune responses, is required in peripheral T-lymphocytes for the production of the effector cytokines IL2 and IFNG after TCR engagement and for optimal induction of antibody responses to antigens. In epithelial cells stimulated with lysophosphatidic acid (LPA), is activated through a PKC-dependent pathway and mediates LPA-stimulated interleukin-8 (IL8) secretion via a NF-kappa-B-dependent pathway. During TCR-induced T-cell activation, interacts with and is activated by the tyrosine kinase LCK, which results in the activation of the NFAT transcription factors. In the trans-Golgi network (TGN), regulates the fission of transport vesicles that are on their way to the plasma membrane and in polarized cells is involved in the transport of proteins from the TGN to the basolateral membrane. Plays an important role in endothelial cell proliferation and migration prior to angiogenesis, partly through modulation of the expression of KDR/VEGFR2 and FGFR1, two key growth factor receptors involved in angiogenesis. In secretory pathway, is required for the release of chromogranin-A (CHGA)-containing secretory granules from the TGN. Downstream of PRKCA, plays important roles in angiotensin-2-induced monocyte adhesion to endothelial cells. This Mus musculus (Mouse) protein is Serine/threonine-protein kinase D2 (Prkd2).